Here is a 350-residue protein sequence, read N- to C-terminus: Histidinol-phosphate aminotransferase 1 (350 aa).

Position 211 is an N6-(pyridoxal phosphate)lysine (K211).

Belongs to the class-II pyridoxal-phosphate-dependent aminotransferase family. Histidinol-phosphate aminotransferase subfamily. Homodimer. The cofactor is pyridoxal 5'-phosphate.

The catalysed reaction is L-histidinol phosphate + 2-oxoglutarate = 3-(imidazol-4-yl)-2-oxopropyl phosphate + L-glutamate. The protein operates within amino-acid biosynthesis; L-histidine biosynthesis; L-histidine from 5-phospho-alpha-D-ribose 1-diphosphate: step 7/9. The chain is Histidinol-phosphate aminotransferase 1 from Trichormus variabilis (strain ATCC 29413 / PCC 7937) (Anabaena variabilis).